We begin with the raw amino-acid sequence, 295 residues long: Zinc finger transcription factor pqm-1 (295 aa).

The disordered stretch occupies residues 1 to 23 (MSFLNNDFGSPPATSSPPTTMPK). Residues 10 to 22 (SPPATSSPPTTMP) are compositionally biased toward low complexity. Residues 161-183 (YMCTVCRKVYGRYNSVSYHVTIY) form a C2H2-type 1; degenerate zinc finger. The C2H2-type 2 zinc-finger motif lies at 227–249 (RKCPHCRHVSKSPAMLEKHIRRH).

It belongs to the krueppel C2H2-type zinc-finger protein family. Interacts with ceh-60.

The protein resides in the chromosome. The protein localises to the nucleus. It is found in the cytoplasm. Its function is as follows. Zinc finger transcription factor which acts as both a transcriptional activator and repressor. Binds to the promoters of genes that contain the 5'-CTTATCA-3' DNA consensus sequence in their regulatory region. Functions downstream of the Insulin/IGF-1-like signaling (IIS) mediated pathway. Involved in normal development, lifespan, stress response, lipid metabolism, innate immunity and exit from the developmentally arrested larval state known as dauer. Required for stress-induced expression of hsp-90 and resistance to heat stress, perhaps as part of a systemic stress signaling pathway. Involved in maintenance of proteostasis. Under hypoxic stress increases lipid levels by positively regulating fatty acid synthesis via fat-7 expression. Associates with homeobox protein ceh-60 at the promoters of some stress-responsive genes to regulate expression; may require phosphorylation for transcriptional repression activity. Acts downstream of nhr-14 to activate transcription of intestinal metal transporter smf-3, modulating innate immunity and iron uptake. May act downstream of the mTORC2 signaling mediated pathway. May act in a mutually exclusive manner with the FOXO transcription factor daf-16. This Caenorhabditis elegans protein is Zinc finger transcription factor pqm-1.